Consider the following 363-residue polypeptide: Pyrimidine monooxygenase RutA (363 aa).

Residues 49-50, Asn115, Glu124, 140-141, and Ser190 each bind FMN; these read IK and RY.

It belongs to the NtaA/SnaA/DszA monooxygenase family. RutA subfamily.

It carries out the reaction uracil + FMNH2 + NADH + O2 = (Z)-3-ureidoacrylate + FMN + NAD(+) + H2O + H(+). The enzyme catalyses thymine + FMNH2 + NADH + O2 = (Z)-2-methylureidoacrylate + FMN + NAD(+) + H2O + H(+). Its function is as follows. Catalyzes the pyrimidine ring opening between N-3 and C-4 by an unusual flavin hydroperoxide-catalyzed mechanism, adding oxygen atoms in the process to yield ureidoacrylate peracid, that immediately reacts with FMN forming ureidoacrylate and FMN-N(5)-oxide. The FMN-N(5)-oxide reacts spontaneously with NADH to produce FMN. Requires the flavin reductase RutF to regenerate FMN in vivo. In Escherichia coli O6:K15:H31 (strain 536 / UPEC), this protein is Pyrimidine monooxygenase RutA.